A 275-amino-acid polypeptide reads, in one-letter code: NAD kinase (275 aa).

Aspartate 68 functions as the Proton acceptor in the catalytic mechanism. Residues 68–69 (DG), arginine 73, 136–137 (NE), lysine 147, arginine 164, aspartate 166, 177–182 (TAYAMS), alanine 201, and glutamine 236 contribute to the NAD(+) site.

Belongs to the NAD kinase family. It depends on a divalent metal cation as a cofactor.

Its subcellular location is the cytoplasm. It carries out the reaction NAD(+) + ATP = ADP + NADP(+) + H(+). In terms of biological role, involved in the regulation of the intracellular balance of NAD and NADP, and is a key enzyme in the biosynthesis of NADP. Catalyzes specifically the phosphorylation on 2'-hydroxyl of the adenosine moiety of NAD to yield NADP. This Methanosarcina barkeri (strain Fusaro / DSM 804) protein is NAD kinase.